The primary structure comprises 156 residues: Small ribosomal subunit protein uS7 (156 aa).

It belongs to the universal ribosomal protein uS7 family. In terms of assembly, part of the 30S ribosomal subunit. Contacts proteins S9 and S11.

One of the primary rRNA binding proteins, it binds directly to 16S rRNA where it nucleates assembly of the head domain of the 30S subunit. Is located at the subunit interface close to the decoding center, probably blocks exit of the E-site tRNA. This Solidesulfovibrio magneticus (strain ATCC 700980 / DSM 13731 / RS-1) (Desulfovibrio magneticus) protein is Small ribosomal subunit protein uS7.